The primary structure comprises 247 residues: Phycobilisome rod-core linker polypeptide CpcG2 (247 aa).

The PBS-linker domain occupies 11-189; that stretch reads SSQNQRVPGY…YWRDKLESER (179 aa). The interval 223-247 is disordered; it reads PDTTRNTTPTGIPISVNPSANFPVR.

It belongs to the phycobilisome linker protein family. In terms of assembly, part of the phycobilisome, a hemidiscoidal structure that is composed of two distinct substructures: a core complex and a number of rods radiating from the core.

It localises to the cellular thylakoid membrane. Rod-core linker protein required for attachment of phycocyanin to allophycocyanin in cores of phycobilisomes. In terms of biological role, linker polypeptides determine the state of aggregation and the location of the disk-shaped phycobiliprotein units within the phycobilisome and modulate their spectroscopic properties in order to mediate a directed and optimal energy transfer. This is Phycobilisome rod-core linker polypeptide CpcG2 from Nostoc sp. (strain PCC 7120 / SAG 25.82 / UTEX 2576).